The sequence spans 594 residues: MVKHTKSKNDFDAELLLSETSKIGDPWVPIYQTAVDIEAHHFETAMSNLIKQPNINSTVIMRADILKENVFDVENGDSTFVSKLINKVPEFPSENPDDVILHRYLDDIDLRTISLNNSELKLNTKCEVVRRIIPRNPFKDHIINQTCLVLSSSNADPESHTEKESDDSVLVVYIPHIQSSDEIPFYLPPVYGVGILYHKSTLSIQYLPFNYQNYKTSPEIQLSLRNLDVTERPIRIALRLLQTSSKHSLGAKSGYEKRVNHDLVVPKIAFQNRYITLKKKYSSNLVNSWCESTDPKKHVFEDLAIAAFLIELWTVKYKSREDFEFRDLGCGNGLLVYILNMEGYSGKGIDARSRKSWSTYPENVQNNLSEQIIIPSVLLKPHPALSRLIPNVTDNFRYFQAPQLPSKNNCSCEAENVPADDKSTSHTNSSSTLTTYSSANLLESSQVCTTEEFPPNTFIIGNHSDELTCWIPLLGYPFMVIPCCSHALSGAKVRYSPRKQQKSNQQQNVSTYGALVDHTEDLAKQMGWIVEKEMLRIPSTRNAAIIATKRQPHCIDENDEVTQTRVLDILALEGGAEGWVENSINLMKKAPRNH.

Belongs to the TRM44 family.

Its subcellular location is the cytoplasm. It catalyses the reaction uridine(44) in tRNA(Ser) + S-adenosyl-L-methionine = 2'-O-methyluridine(44) in tRNA(Ser) + S-adenosyl-L-homocysteine + H(+). Its function is as follows. Probable adenosyl-L-methionine (AdoMet)-dependent tRNA (uracil-O(2)-)-methyltransferase. This Debaryomyces hansenii (strain ATCC 36239 / CBS 767 / BCRC 21394 / JCM 1990 / NBRC 0083 / IGC 2968) (Yeast) protein is tRNA (uracil-O(2)-)-methyltransferase (TRM44).